The chain runs to 291 residues: Popeye domain-containing protein 3 (291 aa).

Asparagine 4 carries N-linked (GlcNAc...) asparagine glycosylation. Transmembrane regions (helical) follow at residues 27–44 (GAIY…FMGG), 48–70 (FGLL…WAWV), and 77–99 (IFSW…AYQV).

Belongs to the popeye family. In terms of tissue distribution, expressed in cardiac and skeletal muscle.

The protein resides in the membrane. May play a role in the maintenance of heart function mediated, at least in part, through cAMP-binding. May play a role in the regulation of KCNK2-mediated current amplitude. The sequence is that of Popeye domain-containing protein 3 (Popdc3) from Mus musculus (Mouse).